Here is a 315-residue protein sequence, read N- to C-terminus: Porphobilinogen deaminase (315 aa).

The residue at position 234 (C234) is an S-(dipyrrolylmethanemethyl)cysteine.

This sequence belongs to the HMBS family. In terms of assembly, monomer. Dipyrromethane is required as a cofactor.

The enzyme catalyses 4 porphobilinogen + H2O = hydroxymethylbilane + 4 NH4(+). Its pathway is porphyrin-containing compound metabolism; protoporphyrin-IX biosynthesis; coproporphyrinogen-III from 5-aminolevulinate: step 2/4. Functionally, tetrapolymerization of the monopyrrole PBG into the hydroxymethylbilane pre-uroporphyrinogen in several discrete steps. The chain is Porphobilinogen deaminase from Mycolicibacterium paratuberculosis (strain ATCC BAA-968 / K-10) (Mycobacterium paratuberculosis).